We begin with the raw amino-acid sequence, 58 residues long: Preprotein translocase subunit SecG (58 aa).

At 1–33 (MARRRKYEGLNPFVAAGLIKFSEEGELEKIKLS) the chain is on the cytoplasmic side. Residues 34–55 (PKAAIAISLAIIAAILALNLLL) form a helical membrane-spanning segment. Residues 56–58 (PPP) are Extracellular-facing.

Belongs to the SEC61-beta family. In terms of assembly, component of the protein translocase complex. Heterotrimer consisting of alpha (SecY), beta (SecG) and gamma (SecE) subunits. Can form oligomers of the heterotrimer.

It is found in the cell membrane. Its function is as follows. Involved in protein export. The function of the beta subunit is unknown, but it may be involved in stabilization of the trimeric complex. The sequence is that of Preprotein translocase subunit SecG from Pyrobaculum calidifontis (strain DSM 21063 / JCM 11548 / VA1).